The sequence spans 229 residues: 2-C-methyl-D-erythritol 4-phosphate cytidylyltransferase (229 aa).

Belongs to the IspD/TarI cytidylyltransferase family. IspD subfamily.

It catalyses the reaction 2-C-methyl-D-erythritol 4-phosphate + CTP + H(+) = 4-CDP-2-C-methyl-D-erythritol + diphosphate. It participates in isoprenoid biosynthesis; isopentenyl diphosphate biosynthesis via DXP pathway; isopentenyl diphosphate from 1-deoxy-D-xylulose 5-phosphate: step 2/6. Functionally, catalyzes the formation of 4-diphosphocytidyl-2-C-methyl-D-erythritol from CTP and 2-C-methyl-D-erythritol 4-phosphate (MEP). This chain is 2-C-methyl-D-erythritol 4-phosphate cytidylyltransferase, found in Neisseria meningitidis serogroup B (strain ATCC BAA-335 / MC58).